Consider the following 88-residue polypeptide: Protein transport protein SBH2 (88 aa).

The tract at residues 1–42 is disordered; that stretch reads MAASVPPGGQRILQKRRQAQSIKEKQAKQTPTSTRQAGYGGS. At 1 to 61 the chain is on the cytoplasmic side; that stretch reads MAASVPPGGQ…DEANGFRVDS (61 aa). Over residues 28–42 the composition is skewed to polar residues; it reads KQTPTSTRQAGYGGS. The helical transmembrane segment at 62-82 threads the bilayer; sequence LVVLFLSVGFIFSVIALHLLT.

This sequence belongs to the SEC61-beta family. Component of the heterotrimeric Ssh1 complex, which is composed of SSH1, SBH2 and SSS1.

The protein resides in the endoplasmic reticulum membrane. Part of the Ssh1 complex, which probably is the major component of a channel-forming translocon complex that may function exclusively in the cotranslational pathway of protein endoplasmic reticulum (ER) import. The chain is Protein transport protein SBH2 (SBH2) from Saccharomyces cerevisiae (strain ATCC 204508 / S288c) (Baker's yeast).